Here is a 312-residue protein sequence, read N- to C-terminus: Aspartate carbamoyltransferase catalytic subunit (312 aa).

Carbamoyl phosphate contacts are provided by R55 and T56. K83 contacts L-aspartate. R105, H133, and Q136 together coordinate carbamoyl phosphate. L-aspartate contacts are provided by R166 and R220. Carbamoyl phosphate is bound by residues G261 and P262.

The protein belongs to the aspartate/ornithine carbamoyltransferase superfamily. ATCase family. In terms of assembly, heterododecamer (2C3:3R2) of six catalytic PyrB chains organized as two trimers (C3), and six regulatory PyrI chains organized as three dimers (R2).

It carries out the reaction carbamoyl phosphate + L-aspartate = N-carbamoyl-L-aspartate + phosphate + H(+). The protein operates within pyrimidine metabolism; UMP biosynthesis via de novo pathway; (S)-dihydroorotate from bicarbonate: step 2/3. Its function is as follows. Catalyzes the condensation of carbamoyl phosphate and aspartate to form carbamoyl aspartate and inorganic phosphate, the committed step in the de novo pyrimidine nucleotide biosynthesis pathway. The polypeptide is Aspartate carbamoyltransferase catalytic subunit (Prosthecochloris aestuarii (strain DSM 271 / SK 413)).